The following is a 216-amino-acid chain: Thiopurine S-methyltransferase (216 aa).

Positions 10, 45, 66, and 123 each coordinate S-adenosyl-L-methionine.

The protein belongs to the class I-like SAM-binding methyltransferase superfamily. TPMT family.

It localises to the cytoplasm. It catalyses the reaction S-adenosyl-L-methionine + a thiopurine = S-adenosyl-L-homocysteine + a thiopurine S-methylether.. The protein is Thiopurine S-methyltransferase of Pseudomonas putida (strain GB-1).